The sequence spans 428 residues: Histidinol dehydrogenase (428 aa).

The NAD(+) site is built by Y129, Q188, and N211. The substrate site is built by S234, Q256, and H259. The Zn(2+) site is built by Q256 and H259. Residues E323 and H324 each act as proton acceptor in the active site. H324, D357, E411, and H416 together coordinate substrate. Residue D357 coordinates Zn(2+). Residue H416 coordinates Zn(2+).

The protein belongs to the histidinol dehydrogenase family. The cofactor is Zn(2+).

The enzyme catalyses L-histidinol + 2 NAD(+) + H2O = L-histidine + 2 NADH + 3 H(+). It participates in amino-acid biosynthesis; L-histidine biosynthesis; L-histidine from 5-phospho-alpha-D-ribose 1-diphosphate: step 9/9. In terms of biological role, catalyzes the sequential NAD-dependent oxidations of L-histidinol to L-histidinaldehyde and then to L-histidine. The chain is Histidinol dehydrogenase from Caulobacter vibrioides (strain ATCC 19089 / CIP 103742 / CB 15) (Caulobacter crescentus).